Consider the following 426-residue polypeptide: AP-1 complex subunit mu-1 (426 aa).

The region spanning 167 to 425 is the MHD domain; it reads KNEVFLDVIE…TQNGTEYSIR (259 aa).

This sequence belongs to the adaptor complexes medium subunit family. As to quaternary structure, adaptor protein complex 1 (AP-1) is a heterotetramer composed of two large adaptins (gamma-type subunit apl4 and beta-type subunit apl2), a medium adaptin (mu-type subunit apm1) and a small adaptin (sigma-type subunit aps1). AP-1 interacts with clathrin. Interacts with sad1.

It localises to the cytoplasmic vesicle. The protein resides in the clathrin-coated vesicle membrane. The protein localises to the membrane. It is found in the clathrin-coated pit. Its function is as follows. Component of the adaptor complexes which link clathrin to receptors in coated vesicles. Clathrin-associated protein complexes are believed to interact with the cytoplasmic tails of membrane proteins, leading to their selection and concentration. This Schizosaccharomyces pombe (strain 972 / ATCC 24843) (Fission yeast) protein is AP-1 complex subunit mu-1 (apm1).